The chain runs to 156 residues: Succinate dehydrogenase assembly factor 2-B, mitochondrial (156 aa).

Residues 1–24 (MLRQFIISRVGRRLQLPMITQSRL) constitute a mitochondrion transit peptide.

Belongs to the SDHAF2 family. In terms of assembly, interacts with the flavoprotein subunit within the SDH catalytic dimer.

It is found in the mitochondrion matrix. Its function is as follows. Plays an essential role in the assembly of succinate dehydrogenase (SDH), an enzyme complex (also referred to as respiratory complex II) that is a component of both the tricarboxylic acid (TCA) cycle and the mitochondrial electron transport chain, and which couples the oxidation of succinate to fumarate with the reduction of ubiquinone (coenzyme Q) to ubiquinol. Required for flavinylation (covalent attachment of FAD) of the flavoprotein subunit of the SDH catalytic dimer. The protein is Succinate dehydrogenase assembly factor 2-B, mitochondrial of Drosophila sechellia (Fruit fly).